The following is a 511-amino-acid chain: Maturase K (511 aa).

Belongs to the intron maturase 2 family. MatK subfamily.

It is found in the plastid. The protein localises to the chloroplast. Its function is as follows. Usually encoded in the trnK tRNA gene intron. Probably assists in splicing its own and other chloroplast group II introns. This Hordeum secalinum (Meadow barley) protein is Maturase K.